Consider the following 334-residue polypeptide: Holliday junction branch migration complex subunit RuvB (334 aa).

The tract at residues 1 to 181 is large ATPase domain (RuvB-L); sequence MSEFLTPERT…GIILELDFYT (181 aa). ADP is bound by residues Leu-19 and Arg-20. Residues Glu-26, Phe-27, and Ile-28 each contribute to the ATP site. ADP-binding residues include Phe-27, Ile-28, Gly-61, Leu-62, Gly-63, Lys-64, Thr-65, and Thr-66. Leu-62 and Gly-63 together coordinate ATP. ATP contacts are provided by residues 127–129 and Arg-170; that span reads EDF. ADP is bound by residues Tyr-180, Pro-216, and Arg-217. Residues 182 to 255 form a small ATPAse domain (RuvB-S) region; that stretch reads VKELKEIIKR…TMEVLNIDDE (74 aa). An ATP-binding site is contributed by Pro-216. Residues 256–334 form a head domain (RuvB-H) region; the sequence is GLDEFDRKIL…KYEVPENRLF (79 aa). DNA is bound by residues Arg-309 and Arg-314.

This sequence belongs to the RuvB family. As to quaternary structure, homohexamer. Forms an RuvA(8)-RuvB(12)-Holliday junction (HJ) complex. HJ DNA is sandwiched between 2 RuvA tetramers; dsDNA enters through RuvA and exits via RuvB. An RuvB hexamer assembles on each DNA strand where it exits the tetramer. Each RuvB hexamer is contacted by two RuvA subunits (via domain III) on 2 adjacent RuvB subunits; this complex drives branch migration. In the full resolvosome a probable DNA-RuvA(4)-RuvB(12)-RuvC(2) complex forms which resolves the HJ.

The protein resides in the cytoplasm. It catalyses the reaction ATP + H2O = ADP + phosphate + H(+). The RuvA-RuvB-RuvC complex processes Holliday junction (HJ) DNA during genetic recombination and DNA repair, while the RuvA-RuvB complex plays an important role in the rescue of blocked DNA replication forks via replication fork reversal (RFR). RuvA specifically binds to HJ cruciform DNA, conferring on it an open structure. The RuvB hexamer acts as an ATP-dependent pump, pulling dsDNA into and through the RuvAB complex. RuvB forms 2 homohexamers on either side of HJ DNA bound by 1 or 2 RuvA tetramers; 4 subunits per hexamer contact DNA at a time. Coordinated motions by a converter formed by DNA-disengaged RuvB subunits stimulates ATP hydrolysis and nucleotide exchange. Immobilization of the converter enables RuvB to convert the ATP-contained energy into a lever motion, pulling 2 nucleotides of DNA out of the RuvA tetramer per ATP hydrolyzed, thus driving DNA branch migration. The RuvB motors rotate together with the DNA substrate, which together with the progressing nucleotide cycle form the mechanistic basis for DNA recombination by continuous HJ branch migration. Branch migration allows RuvC to scan DNA until it finds its consensus sequence, where it cleaves and resolves cruciform DNA. Functionally, promotes Holliday junction (HJ) branch migration in conjunction with RuvA. Subunits can be free, ADP- or ATP-bound; nucleotide binding changes during the reaction cycle. Has a DNA-dependent ATPase activity; dsDNA and supercoiled DNA but not ssDNA stimulate activity. The protein is Holliday junction branch migration complex subunit RuvB of Thermotoga maritima (strain ATCC 43589 / DSM 3109 / JCM 10099 / NBRC 100826 / MSB8).